The primary structure comprises 138 residues: Large ribosomal subunit protein uL16 (138 aa).

Residues 1 to 13 show a composition bias toward basic residues; the sequence is MLQPSRRKYRKEQ. The segment at 1 to 22 is disordered; that stretch reads MLQPSRRKYRKEQKGRNTGLAT.

The protein belongs to the universal ribosomal protein uL16 family. Part of the 50S ribosomal subunit.

In terms of biological role, binds 23S rRNA and is also seen to make contacts with the A and possibly P site tRNAs. This chain is Large ribosomal subunit protein uL16, found in Bordetella petrii (strain ATCC BAA-461 / DSM 12804 / CCUG 43448).